A 122-amino-acid chain; its full sequence is Small ribosomal subunit protein uS13 (122 aa).

The segment at 99–122 is disordered; that stretch reads RGQRTHTNARTRKGPAKAIAGKKK.

This sequence belongs to the universal ribosomal protein uS13 family. As to quaternary structure, part of the 30S ribosomal subunit. Forms a loose heterodimer with protein S19. Forms two bridges to the 50S subunit in the 70S ribosome.

In terms of biological role, located at the top of the head of the 30S subunit, it contacts several helices of the 16S rRNA. In the 70S ribosome it contacts the 23S rRNA (bridge B1a) and protein L5 of the 50S subunit (bridge B1b), connecting the 2 subunits; these bridges are implicated in subunit movement. Contacts the tRNAs in the A and P-sites. In Rhizobium leguminosarum bv. trifolii (strain WSM2304), this protein is Small ribosomal subunit protein uS13.